The sequence spans 207 residues: Lipid A acyltransferase PagP (207 aa).

A signal peptide spans 1-24 (MKFDLTAACTLSATLLVSSGTVFA). Residues histidine 79, aspartate 122, and serine 123 contribute to the active site.

This sequence belongs to the lipid A palmitoyltransferase family. Homodimer.

It is found in the cell outer membrane. It catalyses the reaction a lipid A + a 1,2-diacyl-sn-glycero-3-phosphocholine = a hepta-acyl lipid A + a 2-acyl-sn-glycero-3-phosphocholine. It carries out the reaction a lipid IVA + a 1,2-diacyl-sn-glycero-3-phosphocholine = a lipid IVB + a 2-acyl-sn-glycero-3-phosphocholine. The catalysed reaction is a lipid IIA + a 1,2-diacyl-sn-glycero-3-phosphocholine = a lipid IIB + a 2-acyl-sn-glycero-3-phosphocholine. Transfers a fatty acid residue from the sn-1 position of a phospholipid to the N-linked hydroxyfatty acid chain on the proximal unit of lipid A or its precursors. This Photorhabdus laumondii subsp. laumondii (strain DSM 15139 / CIP 105565 / TT01) (Photorhabdus luminescens subsp. laumondii) protein is Lipid A acyltransferase PagP.